A 236-amino-acid chain; its full sequence is Peptidase E (236 aa).

Residues Ser122, Asp137, and His159 each act as charge relay system in the active site.

Belongs to the peptidase S51 family.

The protein localises to the cytoplasm. It carries out the reaction Dipeptidase E catalyzes the hydrolysis of dipeptides Asp-|-Xaa. It does not act on peptides with N-terminal Glu, Asn or Gln, nor does it cleave isoaspartyl peptides.. Its function is as follows. Hydrolyzes dipeptides containing N-terminal aspartate residues. May play a role in allowing the cell to use peptide aspartate to spare carbon otherwise required for the synthesis of the aspartate family of amino acids. This Shewanella sp. (strain MR-4) protein is Peptidase E.